The sequence spans 201 residues: Alpha-1-acid glycoprotein 2 (201 aa).

A signal peptide spans 1-18 (MALSWVLTVLSLLPLLEA). Gln19 bears the Pyrrolidone carboxylic acid mark. Intrachain disulfides connect Cys23/Cys165 and Cys90/Cys183. A glycan (N-linked (GlcNAc...) (complex) asparagine) is linked at Asn33. N-linked (GlcNAc...) asparagine glycosylation is found at Asn56, Asn72, Asn93, and Asn103.

The protein belongs to the calycin superfamily. Lipocalin family. Post-translationally, N-glycosylated. N-glycan heterogeneity at Asn-33: Hex5HexNAc4 (minor), Hex6HexNAc5 (major) and dHex1Hex6HexNAc5 (minor). As to expression, expressed by the liver and secreted in plasma.

It localises to the secreted. In terms of biological role, functions as a transport protein in the blood stream. Binds various hydrophobic ligands in the interior of its beta-barrel domain. Also binds synthetic drugs and influences their distribution and availability. Appears to function in modulating the activity of the immune system during the acute-phase reaction. The sequence is that of Alpha-1-acid glycoprotein 2 (ORM2) from Homo sapiens (Human).